The primary structure comprises 355 residues: Erythronate-4-phosphate dehydrogenase (355 aa).

Substrate is bound by residues Ser45 and Thr66. Asp146 contacts NAD(+). Arg206 is a catalytic residue. Residue Asp229 coordinates NAD(+). Glu234 is an active-site residue. The Proton donor role is filled by His251. Gly254 is a binding site for NAD(+). Tyr255 serves as a coordination point for substrate.

It belongs to the D-isomer specific 2-hydroxyacid dehydrogenase family. PdxB subfamily. As to quaternary structure, homodimer.

Its subcellular location is the cytoplasm. It carries out the reaction 4-phospho-D-erythronate + NAD(+) = (R)-3-hydroxy-2-oxo-4-phosphooxybutanoate + NADH + H(+). It participates in cofactor biosynthesis; pyridoxine 5'-phosphate biosynthesis; pyridoxine 5'-phosphate from D-erythrose 4-phosphate: step 2/5. Its function is as follows. Catalyzes the oxidation of erythronate-4-phosphate to 3-hydroxy-2-oxo-4-phosphonooxybutanoate. The chain is Erythronate-4-phosphate dehydrogenase from Acinetobacter baumannii (strain ATCC 17978 / DSM 105126 / CIP 53.77 / LMG 1025 / NCDC KC755 / 5377).